The following is a 369-amino-acid chain: Cystathionine gamma-synthase (369 aa).

At K200 the chain carries N6-(pyridoxal phosphate)lysine.

It belongs to the trans-sulfuration enzymes family. Homotetramer. The cofactor is pyridoxal 5'-phosphate.

The protein resides in the cytoplasm. The enzyme catalyses O-succinyl-L-homoserine + L-cysteine = L,L-cystathionine + succinate + H(+). Its function is as follows. Catalyzes the formation of L-cystathionine from O-succinyl-L-homoserine (OSHS) and L-cysteine, via a gamma-replacement reaction. In the absence of thiol, catalyzes gamma-elimination to form 2-oxobutanoate, succinate and ammonia. The chain is Cystathionine gamma-synthase (metB) from Haemophilus influenzae (strain ATCC 51907 / DSM 11121 / KW20 / Rd).